Here is a 603-residue protein sequence, read N- to C-terminus: Growth-regulating factor 6 (603 aa).

Positions 34–58 (KHGRGNAGDQEHEWRPPAKQARGGD) are disordered. The QLQ domain occupies 158-193 (PFTPSQWIELEHQALIYKYLAANSPVPHSLLIPIRR). The WRC domain occupies 223–267 (DPEPGRCRRTDGKKWRCSRDAVADQKYCERHMNRGRHRSRKHVEG). 2 consecutive short sequence motifs (bipartite nuclear localization signal) follow at residues 228-238 (RCRRTDGKKWR) and 256-263 (RGRHRSRK). Over residues 561–571 (FGSVSSSTGSS) the composition is skewed to low complexity. The segment at 561 to 582 (FGSVSSSTGSSPRLENHSVYDG) is disordered.

This sequence belongs to the GRF family.

The protein localises to the nucleus. Functionally, transcription activator that plays a regulatory role in gibberellin-induced stem elongation. This chain is Growth-regulating factor 6 (GRF6), found in Oryza sativa subsp. japonica (Rice).